The following is a 352-amino-acid chain: Protein RecA (352 aa).

ATP is bound at residue 67–74 (GPESSGKT).

Belongs to the RecA family.

It localises to the cytoplasm. Functionally, can catalyze the hydrolysis of ATP in the presence of single-stranded DNA, the ATP-dependent uptake of single-stranded DNA by duplex DNA, and the ATP-dependent hybridization of homologous single-stranded DNAs. It interacts with LexA causing its activation and leading to its autocatalytic cleavage. This Chlamydia trachomatis serovar A (strain ATCC VR-571B / DSM 19440 / HAR-13) protein is Protein RecA.